The following is a 391-amino-acid chain: Putative neutrophil cytosol factor 1B (391 aa).

Residues 1 to 126 (MGDTFIRHIA…DFFKVRPDDL (126 aa)) enclose the PX domain. 2 consecutive SH3 domains span residues 157–216 (IILQ…PLDS) and 227–286 (YAGE…KSGQ). Positions 286 to 391 (QDVSQAQRQI…STKRKLASAV (106 aa)) are disordered. 2 positions are modified to phosphoserine: S304 and S305. Over residues 310-319 (HSIHQRSRKR) the composition is skewed to basic residues. Phosphoserine is present on residues S321, S329, S346, and S349.

The protein resides in the cytoplasm. Its function is as follows. May be required for activation of the latent NADPH oxidase (necessary for superoxide production). In Homo sapiens (Human), this protein is Putative neutrophil cytosol factor 1B (NCF1B).